A 381-amino-acid polypeptide reads, in one-letter code: 40-kDa huntingtin-associated protein (381 aa).

Alanine 2 carries the N-acetylalanine modification. The Nuclear localization signal motif lies at 34–36; sequence KKR. Residues 213 to 260 are disordered; the sequence is EHGGHPVQQPELPQQLPSVPQPSLPGPQPRPVLGSTLPLPLPPDHAPG. The span at 218-230 shows a compositional bias: low complexity; that stretch reads PVQQPELPQQLPS. A compositionally biased stretch (pro residues) spans 231 to 242; sequence VPQPSLPGPQPR.

As to quaternary structure, interacts with HTT (via C-terminus). Interacts with RAB5A. Found in a complex with F8A1/F8A2/F8A3, HTT and RAB5A; mediates the recruitment of HTT by RAB5A onto early endosomes.

It localises to the cytoplasm. The protein resides in the nucleus. The protein localises to the early endosome. Its subcellular location is the nuclear body. Its function is as follows. RAB5A effector molecule that is involved in vesicular trafficking of early endosomes. Mediates the recruitment of HTT by RAB5A onto early endosomes. The HTT-F8A1/F8A2/F8A3-RAB5A complex stimulates early endosomal interaction with actin filaments and inhibits interaction with microtubules, leading to the reduction of endosome motility. This is 40-kDa huntingtin-associated protein (F8a1) from Rattus norvegicus (Rat).